Reading from the N-terminus, the 461-residue chain is Transcription factor phm6 (461 aa).

Residues 18-50 constitute a DNA-binding region (zn(2)-C6 fungal-type); the sequence is CNRCRNHKLKCVVTEAPNGTACCQRCIRAMVPC. 2 disordered regions span residues 55-79 and 256-278; these read RERKKRGSSPRVVPQSPWMHSPWET and LQTDDSSSTQSESSRSRASVGAT. The span at 256–274 shows a compositional bias: low complexity; it reads LQTDDSSSTQSESSRSRAS.

The protein localises to the nucleus. Its function is as follows. Transcription factor that regulates the expression of the gene cluster that mediates the biosynthesis of the trans-fused decalin-containing tetramic acid phomasetin. The protein is Transcription factor phm6 of Pyrenochaetopsis sp.